A 305-amino-acid chain; its full sequence is UDP-3-O-acyl-N-acetylglucosamine deacetylase (305 aa).

The Zn(2+) site is built by histidine 79, histidine 238, and aspartate 242. Histidine 265 functions as the Proton donor in the catalytic mechanism.

Belongs to the LpxC family. Requires Zn(2+) as cofactor.

It catalyses the reaction a UDP-3-O-[(3R)-3-hydroxyacyl]-N-acetyl-alpha-D-glucosamine + H2O = a UDP-3-O-[(3R)-3-hydroxyacyl]-alpha-D-glucosamine + acetate. It participates in glycolipid biosynthesis; lipid IV(A) biosynthesis; lipid IV(A) from (3R)-3-hydroxytetradecanoyl-[acyl-carrier-protein] and UDP-N-acetyl-alpha-D-glucosamine: step 2/6. Its function is as follows. Catalyzes the hydrolysis of UDP-3-O-myristoyl-N-acetylglucosamine to form UDP-3-O-myristoylglucosamine and acetate, the committed step in lipid A biosynthesis. In Haemophilus influenzae (strain PittEE), this protein is UDP-3-O-acyl-N-acetylglucosamine deacetylase.